Here is a 455-residue protein sequence, read N- to C-terminus: Epoxide hydrolase 1 (455 aa).

Residues 1–21 form a helical; Signal-anchor for type III membrane protein membrane-spanning segment; it reads MWLELILASVLGFVIYWFVSR. The Cytoplasmic portion of the chain corresponds to 22-455; that stretch reads DKEETLPLED…RKFVSLAELQ (434 aa). The active-site Nucleophile is Asp226. Arg295 carries the dimethylated arginine modification. The Proton donor role is filled by Tyr374. The Proton acceptor role is filled by His431. At Lys439 the chain carries N6-acetyllysine.

This sequence belongs to the peptidase S33 family.

Its subcellular location is the microsome membrane. It is found in the endoplasmic reticulum membrane. The catalysed reaction is cis-stilbene oxide + H2O = (1R,2R)-hydrobenzoin. The enzyme catalyses 1-(4-methoxyphenyl)-N-methyl-N-[(3-methyloxetan-3-yl)methyl]methanamine + H2O = 2-{[(4-methoxybenzyl)(methyl)amino]methyl}-2-methylpropane-1,3-diol. It catalyses the reaction 8,9-epoxy-(5Z,11Z,14Z)-eicosatrienoate + H2O = 8,9-dihydroxy-(5Z,11Z,14Z)-eicosatrienoate. It carries out the reaction 11,12-epoxy-(5Z,8Z,14Z)-eicosatrienoate + H2O = 11,12-dihydroxy-(5Z,8Z,14Z)-eicosatrienoate. The catalysed reaction is 2-(5Z,8Z,11Z,14Z-eicosatetraenoyl)-glycerol + H2O = glycerol + (5Z,8Z,11Z,14Z)-eicosatetraenoate + H(+). Inhibited by 10-hydroxystearamide and methoxy-arachidonyl fluorophosphate. Biotransformation enzyme that catalyzes the hydrolysis of arene and aliphatic epoxides to less reactive and more water soluble dihydrodiols by the trans addition of water. May play a role in the metabolism of endogenous lipids such as epoxide-containing fatty acids. Metabolizes the abundant endocannabinoid 2-arachidonoylglycerol (2-AG) to free arachidonic acid (AA) and glycerol. Binds 20(S)-hydroxycholesterol (20(S)-OHC). This Mus musculus (Mouse) protein is Epoxide hydrolase 1.